We begin with the raw amino-acid sequence, 620 residues long: MSPSSRFRNLVSVDSSSQDFGKRSSLYASLLDSASVSSLPGICSTAEDRDVEDESWKDPSSSSHCAKTEGGACAFPRLNQVLSSLRDPMGVFSRAKRRRSLGKAVGLSTSVICVVALFGIVCLCLYGLVNFSFTSVETSPLDDPRNSPVMGELGNPQASTPSSARADTPARHDRQNQMFSPWSVQNEQFLGEDSDALPHAGPLFRSGVMVMPLRKMKSLRRIGWDKNTITVPDLQAHLVAALRMQEGLSKKDDGNLSGLSDGDDISIHDYMNSQYYTEIYVGSPGQKVRVVVDTGSSDLWVCSASCGILLNILHKTYNHGKSDTYHADGTPYHVQYASGPVGGFLSADDVALASLKTKNFLLAEAVDLKGLGTAFFFGKFDGILGMGFPSLATKGLKPFMQAAVEQNVVKNWVFVFYLASANGVDGELAIGGVDQERFIGDINFSPVVDFRYWMINTKGLKSDGDLIAPTTKMIIDSGTSLIVGPLDEVKRIATMMGAFSVPLMPEGMFFISCEKAKVLRDLQLEIEGQDYPIKIKDLLISASAAAGTPCLFGMMGLKALEGGRPTPQKNGFGIFPPSQLVASAKGPIGRTWILGDLFMRNVYTVFDYDNKQIGFARLKN.

The Cytoplasmic portion of the chain corresponds to 1 to 110 (MSPSSRFRNL…LGKAVGLSTS (110 aa)). Positions 1–258 (MSPSSRFRNL…SKKDDGNLSG (258 aa)) are excised as a propeptide. The interval 27–31 (YASLL) is important for proper cellular trafficking. A helical; Signal-anchor for type II membrane protein membrane pass occupies residues 111–131 (VICVVALFGIVCLCLYGLVNF). Residues 132 to 620 (SFTSVETSPL…KQIGFARLKN (489 aa)) are Lumenal-facing. The disordered stretch occupies residues 138 to 174 (TSPLDDPRNSPVMGELGNPQASTPSSARADTPARHDR). The segment covering 156–165 (PQASTPSSAR) has biased composition (polar residues). One can recognise a Peptidase A1 domain in the interval 275–616 (YYTEIYVGSP…DYDNKQIGFA (342 aa)). Active-site residues include Asp293 and Asp476. The cysteines at positions 513 and 550 are disulfide-linked.

The protein belongs to the peptidase A1 family. Post-translationally, proteolytically cleaved into the soluble active mature form by, at least, cysteine protease CPL. Undergoes at least four processing steps; the first cleavage removes the propeptide resulting in the production of a soluble 45 kDa protein, which is further processed into a 35 kDa form followed by an additional processing into the final active 30 kDa form.

Its subcellular location is the membrane. The protein localises to the vacuole. Functionally, aspartyl protease which is dispensable for protein degradation in the vacuolar compartment (VAC) or for tachyzoite and bradyzoite viability. This chain is Aspartic protease 1, found in Toxoplasma gondii.